The sequence spans 291 residues: Probable cell wall amidase LytH (291 aa).

An N-terminal signal peptide occupies residues M1–D40. One can recognise an SH3b domain in the interval E41 to N105. Positions I122–K286 constitute a MurNAc-LAA domain. The interval V123–N147 is disordered. Residues Q133–K142 are compositionally biased toward polar residues.

The protein belongs to the N-acetylmuramoyl-L-alanine amidase 3 family.

Its subcellular location is the secreted. Its function is as follows. Probably involved in cell-wall metabolism. The sequence is that of Probable cell wall amidase LytH (lytH) from Staphylococcus epidermidis (strain ATCC 12228 / FDA PCI 1200).